The primary structure comprises 299 residues: Acetylglutamate kinase (299 aa).

Residues 66 to 67 (GG), Arg88, and Asn196 contribute to the substrate site.

It belongs to the acetylglutamate kinase family. ArgB subfamily.

The protein localises to the cytoplasm. The enzyme catalyses N-acetyl-L-glutamate + ATP = N-acetyl-L-glutamyl 5-phosphate + ADP. The protein operates within amino-acid biosynthesis; L-arginine biosynthesis; N(2)-acetyl-L-ornithine from L-glutamate: step 2/4. In terms of biological role, catalyzes the ATP-dependent phosphorylation of N-acetyl-L-glutamate. This Alcanivorax borkumensis (strain ATCC 700651 / DSM 11573 / NCIMB 13689 / SK2) protein is Acetylglutamate kinase.